The sequence spans 294 residues: NAD kinase (294 aa).

The active-site Proton acceptor is the Asp74. Residues 74–75 (DG), Arg79, 149–150 (NE), Asp179, 190–195 (TGYSMS), and Ala214 each bind NAD(+).

Belongs to the NAD kinase family. Requires a divalent metal cation as cofactor.

Its subcellular location is the cytoplasm. The enzyme catalyses NAD(+) + ATP = ADP + NADP(+) + H(+). Involved in the regulation of the intracellular balance of NAD and NADP, and is a key enzyme in the biosynthesis of NADP. Catalyzes specifically the phosphorylation on 2'-hydroxyl of the adenosine moiety of NAD to yield NADP. This is NAD kinase from Flavobacterium psychrophilum (strain ATCC 49511 / DSM 21280 / CIP 103535 / JIP02/86).